We begin with the raw amino-acid sequence, 97 residues long: Aspartyl/glutamyl-tRNA(Asn/Gln) amidotransferase subunit C (97 aa).

This sequence belongs to the GatC family. As to quaternary structure, heterotrimer of A, B and C subunits.

It catalyses the reaction L-glutamyl-tRNA(Gln) + L-glutamine + ATP + H2O = L-glutaminyl-tRNA(Gln) + L-glutamate + ADP + phosphate + H(+). It carries out the reaction L-aspartyl-tRNA(Asn) + L-glutamine + ATP + H2O = L-asparaginyl-tRNA(Asn) + L-glutamate + ADP + phosphate + 2 H(+). Its function is as follows. Allows the formation of correctly charged Asn-tRNA(Asn) or Gln-tRNA(Gln) through the transamidation of misacylated Asp-tRNA(Asn) or Glu-tRNA(Gln) in organisms which lack either or both of asparaginyl-tRNA or glutaminyl-tRNA synthetases. The reaction takes place in the presence of glutamine and ATP through an activated phospho-Asp-tRNA(Asn) or phospho-Glu-tRNA(Gln). This Thermosynechococcus vestitus (strain NIES-2133 / IAM M-273 / BP-1) protein is Aspartyl/glutamyl-tRNA(Asn/Gln) amidotransferase subunit C.